Consider the following 165-residue polypeptide: Myosin regulatory light chain 2A, cardiac muscle isoform (165 aa).

A2 bears the N,N,N-trimethylalanine mark. 3 EF-hand domains span residues 24–59 (AQIQ…LGRL), 94–128 (DPEE…QEGR), and 129–164 (FSQE…GEEK). Ca(2+) is bound by residues D37, N39, D41, and D48.

As to quaternary structure, myosin is a hexamer of 2 heavy chains and 4 light chains. In terms of processing, the N-terminus is blocked. N,N,N-trimethylalanine, found in other myosin light chains would not have been detected in the N-terminal tryptic peptide in PubMed:7319048 because it would remain trimethylated and ninhydrin negative after hydrolysis.

This Gallus gallus (Chicken) protein is Myosin regulatory light chain 2A, cardiac muscle isoform.